A 319-amino-acid chain; its full sequence is Aspartate carbamoyltransferase catalytic subunit (319 aa).

The carbamoyl phosphate site is built by Arg-57 and Thr-58. Lys-85 provides a ligand contact to L-aspartate. Residues Arg-107, His-135, and Gln-138 each coordinate carbamoyl phosphate. 2 residues coordinate L-aspartate: Arg-168 and Arg-222. Residues Gly-263 and Pro-264 each coordinate carbamoyl phosphate.

Belongs to the aspartate/ornithine carbamoyltransferase superfamily. ATCase family. In terms of assembly, heterododecamer (2C3:3R2) of six catalytic PyrB chains organized as two trimers (C3), and six regulatory PyrI chains organized as three dimers (R2).

It catalyses the reaction carbamoyl phosphate + L-aspartate = N-carbamoyl-L-aspartate + phosphate + H(+). The protein operates within pyrimidine metabolism; UMP biosynthesis via de novo pathway; (S)-dihydroorotate from bicarbonate: step 2/3. Catalyzes the condensation of carbamoyl phosphate and aspartate to form carbamoyl aspartate and inorganic phosphate, the committed step in the de novo pyrimidine nucleotide biosynthesis pathway. This is Aspartate carbamoyltransferase catalytic subunit from Paracoccus denitrificans (strain Pd 1222).